We begin with the raw amino-acid sequence, 156 residues long: Putative pre-16S rRNA nuclease (156 aa).

It belongs to the YqgF nuclease family.

Its subcellular location is the cytoplasm. Functionally, could be a nuclease involved in processing of the 5'-end of pre-16S rRNA. The protein is Putative pre-16S rRNA nuclease of Ehrlichia chaffeensis (strain ATCC CRL-10679 / Arkansas).